The sequence spans 367 residues: NADH-quinone oxidoreductase subunit D (367 aa).

The protein belongs to the complex I 49 kDa subunit family. NDH-1 is composed of 14 different subunits. Subunits NuoB, C, D, E, F, and G constitute the peripheral sector of the complex.

The protein resides in the cell membrane. The enzyme catalyses a quinone + NADH + 5 H(+)(in) = a quinol + NAD(+) + 4 H(+)(out). Its function is as follows. NDH-1 shuttles electrons from NADH, via FMN and iron-sulfur (Fe-S) centers, to quinones in the respiratory chain. The immediate electron acceptor for the enzyme in this species is believed to be ubiquinone. Couples the redox reaction to proton translocation (for every two electrons transferred, four hydrogen ions are translocated across the cytoplasmic membrane), and thus conserves the redox energy in a proton gradient. The sequence is that of NADH-quinone oxidoreductase subunit D from Dehalococcoides mccartyi (strain ATCC BAA-2266 / KCTC 15142 / 195) (Dehalococcoides ethenogenes (strain 195)).